A 326-amino-acid polypeptide reads, in one-letter code: ATP synthase subunit b 2 (326 aa).

A helical membrane pass occupies residues 2–22 (LIDWFTVVAQALNFLILVWLL). Composition is skewed to basic and acidic residues over residues 275-298 (QQGR…RKEN) and 306-326 (PPPE…IGSP). The interval 275–326 (QQGRKEGRAVQNWDKAESEIRKENLSPAKTEPPPEAKAKPKPEEPKPEIGSP) is disordered.

Belongs to the ATPase B chain family. F-type ATPases have 2 components, F(1) - the catalytic core - and F(0) - the membrane proton channel. F(1) has five subunits: alpha(3), beta(3), gamma(1), delta(1), epsilon(1). F(0) has three main subunits: a(1), b(2) and c(10-14). The alpha and beta chains form an alternating ring which encloses part of the gamma chain. F(1) is attached to F(0) by a central stalk formed by the gamma and epsilon chains, while a peripheral stalk is formed by the delta and b chains.

Its subcellular location is the cell inner membrane. In terms of biological role, f(1)F(0) ATP synthase produces ATP from ADP in the presence of a proton or sodium gradient. F-type ATPases consist of two structural domains, F(1) containing the extramembraneous catalytic core and F(0) containing the membrane proton channel, linked together by a central stalk and a peripheral stalk. During catalysis, ATP synthesis in the catalytic domain of F(1) is coupled via a rotary mechanism of the central stalk subunits to proton translocation. Functionally, component of the F(0) channel, it forms part of the peripheral stalk, linking F(1) to F(0). The sequence is that of ATP synthase subunit b 2 from Albidiferax ferrireducens (strain ATCC BAA-621 / DSM 15236 / T118) (Rhodoferax ferrireducens).